We begin with the raw amino-acid sequence, 95 residues long: Oxytetracycline polyketide synthase acyl carrier protein (95 aa).

The region spanning 3–81 is the Carrier domain; sequence LLTLSDLLTL…ALIEMTNASL (79 aa). Position 41 is an O-(pantetheine 4'-phosphoryl)serine (Ser-41).

In terms of processing, 4'-phosphopantetheine is transferred from CoA to a specific serine of the apo-ACP-like protein.

It participates in antibiotic biosynthesis; oxytetracycline biosynthesis. Its function is as follows. Acyl carrier protein. The polypeptide is Oxytetracycline polyketide synthase acyl carrier protein (Streptomyces rimosus).